A 225-amino-acid polypeptide reads, in one-letter code: Small ribosomal subunit protein mS26 (225 aa).

The protein belongs to the mitochondrion-specific ribosomal protein mS26 family. In terms of assembly, component of the mitochondrial ribosome small subunit (28S) which comprises a 12S rRNA and about 30 distinct proteins.

The protein resides in the mitochondrion. The chain is Small ribosomal subunit protein mS26 (mRpS26) from Drosophila melanogaster (Fruit fly).